Reading from the N-terminus, the 210-residue chain is Large ribosomal subunit protein uL3 (210 aa).

The interval 121-150 (GGIKRHGFHRGPMAHGSKYHRRPGSLGAKG) is disordered.

Belongs to the universal ribosomal protein uL3 family. Part of the 50S ribosomal subunit. Forms a cluster with proteins L14 and L19.

Its function is as follows. One of the primary rRNA binding proteins, it binds directly near the 3'-end of the 23S rRNA, where it nucleates assembly of the 50S subunit. This chain is Large ribosomal subunit protein uL3, found in Pelotomaculum thermopropionicum (strain DSM 13744 / JCM 10971 / SI).